A 384-amino-acid chain; its full sequence is GTPase Obg (384 aa).

The Obg domain maps to 1–159 (MKFIDEAKIE…RSLQLELKVL (159 aa)). Positions 20–46 (ATSFRREKFVPRGGPDGGDGGKGGSVW) are disordered. Residues 33–43 (GPDGGDGGKGG) are compositionally biased toward gly residues. One can recognise an OBG-type G domain in the interval 160–348 (ADVGLLGMPN…LVHQINQYLT (189 aa)). Residues 166 to 173 (GMPNAGKS), 191 to 195 (FTTLH), 213 to 216 (DIPG), 284 to 287 (NKLD), and 329 to 331 (SAL) each bind GTP. Residues Ser173 and Thr193 each coordinate Mg(2+).

Belongs to the TRAFAC class OBG-HflX-like GTPase superfamily. OBG GTPase family. Monomer. Requires Mg(2+) as cofactor.

It is found in the cytoplasm. In terms of biological role, an essential GTPase which binds GTP, GDP and possibly (p)ppGpp with moderate affinity, with high nucleotide exchange rates and a fairly low GTP hydrolysis rate. Plays a role in control of the cell cycle, stress response, ribosome biogenesis and in those bacteria that undergo differentiation, in morphogenesis control. The polypeptide is GTPase Obg (Neisseria meningitidis serogroup C / serotype 2a (strain ATCC 700532 / DSM 15464 / FAM18)).